Consider the following 686-residue polypeptide: Probable metal-nicotianamine transporter YSL4 (686 aa).

14 helical membrane passes run 27-47, 53-73, 96-116, 151-171, 203-223, 264-284, 308-328, 373-393, 405-425, 441-461, 488-508, 554-574, 596-616, and 629-649; these read WLVT…FCFV, MMTG…FFLL, MFLI…GFAT, FFLI…IMII, VMTI…QWFY, IVNF…YPYL, VFIS…ILVT, IPMF…MVAM, VGVL…ATGL, IFAA…VSGI, AMIA…PCIF, CVEL…LVLV, FFAG…LLLW, and AAVA…SALL.

This sequence belongs to the YSL (TC 2.A.67.2) family.

The protein localises to the membrane. In terms of biological role, may be involved in the transport of nicotianamine-chelated metals. This is Probable metal-nicotianamine transporter YSL4 (YSL4) from Oryza sativa subsp. japonica (Rice).